The primary structure comprises 303 residues: Dihydroorotate dehydrogenase B (NAD(+)), catalytic subunit (303 aa).

FMN-binding positions include serine 21 and 45–46 (KG). Residues lysine 45 and 69–73 (NAVGL) each bind substrate. Positions 99 and 127 each coordinate FMN. Asparagine 127 contributes to the substrate binding site. Cysteine 130 functions as the Nucleophile in the catalytic mechanism. FMN-binding residues include lysine 165 and isoleucine 191. Residue 192–193 (NT) coordinates substrate. Residues glycine 217, 243 to 244 (GG), and 265 to 266 (GT) contribute to the FMN site.

The protein belongs to the dihydroorotate dehydrogenase family. Type 1 subfamily. In terms of assembly, heterotetramer of 2 PyrK and 2 PyrD type B subunits. Requires FMN as cofactor.

The protein localises to the cytoplasm. The enzyme catalyses (S)-dihydroorotate + NAD(+) = orotate + NADH + H(+). It participates in pyrimidine metabolism; UMP biosynthesis via de novo pathway; orotate from (S)-dihydroorotate (NAD(+) route): step 1/1. Its function is as follows. Catalyzes the conversion of dihydroorotate to orotate with NAD(+) as electron acceptor. The protein is Dihydroorotate dehydrogenase B (NAD(+)), catalytic subunit (pyrD) of Bacteroides fragilis (strain ATCC 25285 / DSM 2151 / CCUG 4856 / JCM 11019 / LMG 10263 / NCTC 9343 / Onslow / VPI 2553 / EN-2).